The primary structure comprises 397 residues: MDSVNNLCRHYEEKVRPCIDLIDTLRALGVEQDLALPAIAVIGDQSSGKSSVLEALSGVALPRGSGIVTRCPLVLKLRKLKEGEEWRGKVSYDDIEVELSDPSEVEEAINKGQNFIAGVGLGISDKLISLDVSSPNVPDLTLIDLPGITRVAVGNQPADIGRQIKRLIKTYIQKQETINLVVVPSNVDIATTEALSMAQEVDPEGDRTIEMVQTAFVKILSNDFGDFLNLCCTAKSKIKEIRLNQEKEAENLIRLHFQMEQIVYCQDQVYKETLKTIREKEAEKEKTKALINPATFQNNSQFPQKGLTTTEMTQHLKAYYQECRRNIGRQIPLIIQYFILKTFGEEIEKTMLQLLQDTSKCSWFLEEQSDTREKKKFLKRRLLRLDEARQKLAKFSD.

It belongs to the TRAFAC class dynamin-like GTPase superfamily. Dynamin/Fzo/YdjA family.

The polypeptide is Protein Mx1 (Mx1) (Mus musculus (Mouse)).